We begin with the raw amino-acid sequence, 495 residues long: Divinyl ether synthase CYP74M3 (495 aa).

Cys446 provides a ligand contact to heme.

This sequence belongs to the cytochrome P450 family. Heme is required as a cofactor.

The catalysed reaction is (13S)-hydroperoxy-(9Z,11E)-octadecadienoate = etheroleate + H2O. It carries out the reaction (13S)-hydroperoxy-(9Z,11E,15Z)-octadecatrienoate = etherolenate + H2O. Its pathway is lipid metabolism; oxylipin biosynthesis. Its function is as follows. Divinyl ether synthase involved in oxylipin biosynthesis. Catalyzes the conversion of (13S)-hydroperoxy-(9Z,11E)-octadecadienoate (13-HPOD) to etheroleate and (13S)-hydroperoxy-(9Z,11E,15Z)-octadecatrienoate (13-HPOT) to etherolenate. Has no activity with the corresponding 9-hydroperoxides (9-HPOD and 9-HPOT). This is Divinyl ether synthase CYP74M3 from Selaginella moellendorffii (Spikemoss).